Consider the following 314-residue polypeptide: Porphobilinogen deaminase (314 aa).

Residue C234 is modified to S-(dipyrrolylmethanemethyl)cysteine.

It belongs to the HMBS family. Monomer. It depends on dipyrromethane as a cofactor.

It carries out the reaction 4 porphobilinogen + H2O = hydroxymethylbilane + 4 NH4(+). It participates in porphyrin-containing compound metabolism; protoporphyrin-IX biosynthesis; coproporphyrinogen-III from 5-aminolevulinate: step 2/4. Its function is as follows. Tetrapolymerization of the monopyrrole PBG into the hydroxymethylbilane pre-uroporphyrinogen in several discrete steps. This Mycobacterium marinum (strain ATCC BAA-535 / M) protein is Porphobilinogen deaminase.